The following is a 332-amino-acid chain: Glycerol-3-phosphate dehydrogenase [NAD(P)+] 2 (332 aa).

NADPH contacts are provided by serine 17, tryptophan 18, arginine 37, and lysine 112. Sn-glycerol 3-phosphate contacts are provided by lysine 112 and glycine 140. Alanine 144 contacts NADPH. Residues lysine 195, aspartate 243, serine 253, arginine 254, and asparagine 255 each contribute to the sn-glycerol 3-phosphate site. Catalysis depends on lysine 195, which acts as the Proton acceptor. Residue arginine 254 participates in NADPH binding. NADPH contacts are provided by valine 278 and glutamate 280.

Belongs to the NAD-dependent glycerol-3-phosphate dehydrogenase family.

The protein localises to the cytoplasm. The enzyme catalyses sn-glycerol 3-phosphate + NAD(+) = dihydroxyacetone phosphate + NADH + H(+). It carries out the reaction sn-glycerol 3-phosphate + NADP(+) = dihydroxyacetone phosphate + NADPH + H(+). The protein operates within membrane lipid metabolism; glycerophospholipid metabolism. Functionally, catalyzes the reduction of the glycolytic intermediate dihydroxyacetone phosphate (DHAP) to sn-glycerol 3-phosphate (G3P), the key precursor for phospholipid synthesis. This is Glycerol-3-phosphate dehydrogenase [NAD(P)+] 2 from Mycolicibacterium paratuberculosis (strain ATCC BAA-968 / K-10) (Mycobacterium paratuberculosis).